A 433-amino-acid polypeptide reads, in one-letter code: 3-phosphoshikimate 1-carboxyvinyltransferase (433 aa).

Lysine 22, serine 23, and arginine 27 together coordinate 3-phosphoshikimate. Lysine 22 is a binding site for phosphoenolpyruvate. The phosphoenolpyruvate site is built by glycine 96 and arginine 130. Residues serine 176, serine 177, glutamine 178, serine 204, aspartate 319, asparagine 342, and lysine 346 each contribute to the 3-phosphoshikimate site. Position 178 (glutamine 178) interacts with phosphoenolpyruvate. Aspartate 319 functions as the Proton acceptor in the catalytic mechanism. The phosphoenolpyruvate site is built by arginine 350, arginine 394, and lysine 419.

This sequence belongs to the EPSP synthase family. Monomer.

It localises to the cytoplasm. The catalysed reaction is 3-phosphoshikimate + phosphoenolpyruvate = 5-O-(1-carboxyvinyl)-3-phosphoshikimate + phosphate. Its pathway is metabolic intermediate biosynthesis; chorismate biosynthesis; chorismate from D-erythrose 4-phosphate and phosphoenolpyruvate: step 6/7. Functionally, catalyzes the transfer of the enolpyruvyl moiety of phosphoenolpyruvate (PEP) to the 5-hydroxyl of shikimate-3-phosphate (S3P) to produce enolpyruvyl shikimate-3-phosphate and inorganic phosphate. The protein is 3-phosphoshikimate 1-carboxyvinyltransferase of Actinobacillus succinogenes (strain ATCC 55618 / DSM 22257 / CCUG 43843 / 130Z).